Consider the following 59-residue polypeptide: MKKTAKHFCPHCQKEVSWQDNPHRPFCSERCKMIDLGSWFSENYKIPGEKKPSEDEDDN.

Zn(2+) is bound by residues cysteine 9, cysteine 12, cysteine 27, and cysteine 31.

Belongs to the DNA gyrase inhibitor YacG family. Interacts with GyrB. The cofactor is Zn(2+).

Inhibits all the catalytic activities of DNA gyrase by preventing its interaction with DNA. Acts by binding directly to the C-terminal domain of GyrB, which probably disrupts DNA binding by the gyrase. The sequence is that of DNA gyrase inhibitor YacG from Geotalea daltonii (strain DSM 22248 / JCM 15807 / FRC-32) (Geobacter daltonii).